The primary structure comprises 341 residues: Ribosomal RNA small subunit methyltransferase C (341 aa).

Belongs to the methyltransferase superfamily. RsmC family. As to quaternary structure, monomer.

It is found in the cytoplasm. It carries out the reaction guanosine(1207) in 16S rRNA + S-adenosyl-L-methionine = N(2)-methylguanosine(1207) in 16S rRNA + S-adenosyl-L-homocysteine + H(+). In terms of biological role, specifically methylates the guanine in position 1207 of 16S rRNA in the 30S particle. In Shewanella halifaxensis (strain HAW-EB4), this protein is Ribosomal RNA small subunit methyltransferase C.